We begin with the raw amino-acid sequence, 228 residues long: N-acylneuraminate cytidylyltransferase (228 aa).

It belongs to the CMP-NeuNAc synthase family.

The protein localises to the cytoplasm. The catalysed reaction is an N-acylneuraminate + CTP = a CMP-N-acyl-beta-neuraminate + diphosphate. This chain is N-acylneuraminate cytidylyltransferase (neuA), found in Neisseria meningitidis serogroup B (strain ATCC BAA-335 / MC58).